We begin with the raw amino-acid sequence, 66 residues long: Large ribosomal subunit protein uL29 (66 aa).

This sequence belongs to the universal ribosomal protein uL29 family.

This is Large ribosomal subunit protein uL29 from Borrelia recurrentis (strain A1).